Reading from the N-terminus, the 291-residue chain is Oxidative stress-responsive serine-rich protein 1 (291 aa).

The segment at 44–139 (RTTVDDTKPK…STGENSTSLD (96 aa)) is disordered. Basic residues predominate over residues 65–83 (STRKSSRGAVRIQRRRRSK). Polar residues-rich tracts occupy residues 95–113 (CSTT…SQTE) and 127–139 (KEFS…TSLD). A Phosphothreonine modification is found at Thr143.

As to expression, ubiquitous with high level in testis, placenta and cardiac myocytes. In terms of tissue distribution, expressed in testis, unpreganant uterus and cardiac myocytes.

The polypeptide is Oxidative stress-responsive serine-rich protein 1 (Oser1) (Rattus norvegicus (Rat)).